Here is a 131-residue protein sequence, read N- to C-terminus: Large-conductance mechanosensitive channel (131 aa).

3 consecutive transmembrane segments (helical) span residues 8–28, 30–50, and 67–87; these read FAIR…GAFG, IVSS…LGGI, and GAFI…FLFV.

It belongs to the MscL family. Homopentamer.

The protein resides in the cell membrane. Functionally, channel that opens in response to stretch forces in the membrane lipid bilayer. May participate in the regulation of osmotic pressure changes within the cell. This chain is Large-conductance mechanosensitive channel, found in Geobacillus thermodenitrificans (strain NG80-2).